A 145-amino-acid chain; its full sequence is Peptide methionine sulfoxide reductase MsrB (145 aa).

The MsrB domain occupies Lys-6–Val-129. Catalysis depends on Cys-118, which acts as the Nucleophile.

Belongs to the MsrB Met sulfoxide reductase family.

The enzyme catalyses L-methionyl-[protein] + [thioredoxin]-disulfide + H2O = L-methionyl-(R)-S-oxide-[protein] + [thioredoxin]-dithiol. This is Peptide methionine sulfoxide reductase MsrB from Listeria monocytogenes serotype 4b (strain CLIP80459).